The primary structure comprises 306 residues: Pantothenate kinase (306 aa).

91–98 is an ATP binding site; that stretch reads GSVAVGKS.

This sequence belongs to the prokaryotic pantothenate kinase family.

It is found in the cytoplasm. The catalysed reaction is (R)-pantothenate + ATP = (R)-4'-phosphopantothenate + ADP + H(+). It participates in cofactor biosynthesis; coenzyme A biosynthesis; CoA from (R)-pantothenate: step 1/5. This Streptococcus pyogenes serotype M1 protein is Pantothenate kinase (coaA).